The primary structure comprises 172 residues: 3-phenylpropionate/cinnamic acid dioxygenase subunit beta (172 aa).

The protein belongs to the bacterial ring-hydroxylating dioxygenase beta subunit family. This dioxygenase system consists of four proteins: the two subunits of the hydroxylase component (HcaE and HcaF), a ferredoxin (HcaC) and a ferredoxin reductase (HcaD).

The catalysed reaction is 3-phenylpropanoate + NADH + O2 + H(+) = 3-(cis-5,6-dihydroxycyclohexa-1,3-dien-1-yl)propanoate + NAD(+). The enzyme catalyses (E)-cinnamate + NADH + O2 + H(+) = (2E)-3-(cis-5,6-dihydroxycyclohexa-1,3-dien-1-yl)prop-2-enoate + NAD(+). The protein operates within aromatic compound metabolism; 3-phenylpropanoate degradation. Part of the multicomponent 3-phenylpropionate dioxygenase. Converts 3-phenylpropionic acid (PP) and cinnamic acid (CI) into 3-phenylpropionate-dihydrodiol (PP-dihydrodiol) and cinnamic acid-dihydrodiol (CI-dihydrodiol), respectively. The protein is 3-phenylpropionate/cinnamic acid dioxygenase subunit beta of Shigella boydii serotype 4 (strain Sb227).